We begin with the raw amino-acid sequence, 215 residues long: LexA repressor (215 aa).

Residues 28-48 constitute a DNA-binding region (H-T-H motif); that stretch reads RAEIAAELGFSSPNAAEEHLR. Residues serine 133 and lysine 170 each act as for autocatalytic cleavage activity in the active site.

Belongs to the peptidase S24 family. Homodimer.

The catalysed reaction is Hydrolysis of Ala-|-Gly bond in repressor LexA.. In terms of biological role, represses a number of genes involved in the response to DNA damage (SOS response), including recA and lexA. In the presence of single-stranded DNA, RecA interacts with LexA causing an autocatalytic cleavage which disrupts the DNA-binding part of LexA, leading to derepression of the SOS regulon and eventually DNA repair. This Burkholderia thailandensis (strain ATCC 700388 / DSM 13276 / CCUG 48851 / CIP 106301 / E264) protein is LexA repressor.